Here is a 356-residue protein sequence, read N- to C-terminus: Glutamine synthetase PR-1 (356 aa).

The 81-residue stretch at 19 to 99 (VIAEYIWIGG…VICDAYTPAG (81 aa)) folds into the GS beta-grasp domain. The interval 41–64 (PGPVKNPSELPKWNYDGSSTGQAP) is disordered. Positions 106–356 (KRHNAAKIFS…IADTTILWKP (251 aa)) constitute a GS catalytic domain.

This sequence belongs to the glutamine synthetase family. Homooctamer. Roots.

Its subcellular location is the cytoplasm. The enzyme catalyses L-glutamate + NH4(+) + ATP = L-glutamine + ADP + phosphate + H(+). This chain is Glutamine synthetase PR-1, found in Phaseolus vulgaris (Kidney bean).